The following is a 318-amino-acid chain: MFTINILLLIIPILLAVAFLTLVERKVLGYMQLRKGPNIVGPYGLLQPIADAIKLFTKEPLQPSTSSTSMFIIAPIMALTLALTMWVPLPMPHPLINMNLGVLFMLAMSSLAVYSILWSGWASNSKYALIGALRAVAQTISYEVTLAIILLSVLLMNGSFTLSTLITTQEHLWLIFPSWPLTMMWFISTLAETNRAPFDLTEGESELVSGFNVEYAAGPFALFFMAEYTNIIMMNAFTTILFLGAFHNPYMPELYTVNFTIKTLLLTISFLWIRASYPRFRYDQLMHLLWKNFLPLTLALCMWHVSLPITMSSIPPQT.

8 helical membrane passes run 2-22 (FTINILLLIIPILLAVAFLTL), 70-90 (MFIIAPIMALTLALTMWVPLP), 100-120 (LGVLFMLAMSSLAVYSILWSG), 146-166 (LAIILLSVLLMNGSFTLSTLI), 171-191 (HLWLIFPSWPLTMMWFISTLA), 222-242 (LFFMAEYTNIIMMNAFTTILF), 253-273 (ELYTVNFTIKTLLLTISFLWI), and 294-314 (LPLTLALCMWHVSLPITMSSI).

It belongs to the complex I subunit 1 family.

The protein resides in the mitochondrion inner membrane. It catalyses the reaction a ubiquinone + NADH + 5 H(+)(in) = a ubiquinol + NAD(+) + 4 H(+)(out). Core subunit of the mitochondrial membrane respiratory chain NADH dehydrogenase (Complex I) that is believed to belong to the minimal assembly required for catalysis. Complex I functions in the transfer of electrons from NADH to the respiratory chain. The immediate electron acceptor for the enzyme is believed to be ubiquinone. This is NADH-ubiquinone oxidoreductase chain 1 (MT-ND1) from Rhinoceros unicornis (Greater Indian rhinoceros).